We begin with the raw amino-acid sequence, 709 residues long: Polyribonucleotide nucleotidyltransferase (709 aa).

Residues D485 and D491 each contribute to the Mg(2+) site. Residues 552 to 611 (PRIYTMKIDPKKIKDVIGKGGATIRSLTEETGTSIDIDDDGTVKIAAVDSNAAKNVMGRI) form the KH domain. The S1 motif domain maps to 621 to 689 (GAIYKGKVTR…RQGRIRLTMK (69 aa)).

This sequence belongs to the polyribonucleotide nucleotidyltransferase family. Component of the RNA degradosome, which is a multiprotein complex involved in RNA processing and mRNA degradation. Mg(2+) is required as a cofactor.

It is found in the cytoplasm. It carries out the reaction RNA(n+1) + phosphate = RNA(n) + a ribonucleoside 5'-diphosphate. Its function is as follows. Involved in mRNA degradation. Catalyzes the phosphorolysis of single-stranded polyribonucleotides processively in the 3'- to 5'-direction. This is Polyribonucleotide nucleotidyltransferase from Haemophilus influenzae (strain PittEE).